Here is a 318-residue protein sequence, read N- to C-terminus: Probable 3-hydroxyisobutyrate dehydrogenase-like 3, mitochondrial (318 aa).

Residues 35–64 (TRIGWIGIGIMGSAMVSHIIAAGYSVTVYA) and Ser-129 each bind NAD(+). Lys-203 is an active-site residue. Residue Lys-271 participates in NAD(+) binding.

The protein belongs to the HIBADH-related family. 3-hydroxyisobutyrate dehydrogenase subfamily.

It localises to the mitochondrion. It carries out the reaction 3-hydroxy-2-methylpropanoate + NAD(+) = 2-methyl-3-oxopropanoate + NADH + H(+). The protein operates within amino-acid degradation; L-valine degradation. In Arabidopsis thaliana (Mouse-ear cress), this protein is Probable 3-hydroxyisobutyrate dehydrogenase-like 3, mitochondrial.